The following is a 141-amino-acid chain: Nucleoside diphosphate kinase (141 aa).

Positions 11, 59, 87, 93, 104, and 114 each coordinate ATP. His117 functions as the Pros-phosphohistidine intermediate in the catalytic mechanism.

It belongs to the NDK family. As to quaternary structure, homotetramer. Requires Mg(2+) as cofactor.

It localises to the cytoplasm. The enzyme catalyses a 2'-deoxyribonucleoside 5'-diphosphate + ATP = a 2'-deoxyribonucleoside 5'-triphosphate + ADP. It carries out the reaction a ribonucleoside 5'-diphosphate + ATP = a ribonucleoside 5'-triphosphate + ADP. Functionally, major role in the synthesis of nucleoside triphosphates other than ATP. The ATP gamma phosphate is transferred to the NDP beta phosphate via a ping-pong mechanism, using a phosphorylated active-site intermediate. The polypeptide is Nucleoside diphosphate kinase (Pseudomonas syringae pv. tomato (strain ATCC BAA-871 / DC3000)).